The chain runs to 271 residues: 4,5-DOPA dioxygenase extradiol (271 aa).

Positions 17, 55, 177, and 232 each coordinate Zn(2+).

Belongs to the DODA-type extradiol aromatic ring-opening dioxygenase family. Requires Zn(2+) as cofactor. Fe(2+) serves as cofactor. In terms of tissue distribution, expressed only in colored petals and pigmented tissues, absent from green stems and leaves.

It localises to the cytoplasm. The enzyme catalyses L-dopa + O2 = 4-(L-alanin-3-yl)-2-hydroxy-cis,cis-muconate 6-semialdehyde + H(+). The protein operates within pigment biosynthesis; betalain biosynthesis. In terms of biological role, opens the cyclic ring of dihydroxy-phenylalanine (DOPA) between carbons 4 and 5, thus producing an unstable seco-DOPA that rearranges nonenzymatically to betalamic acid. This chain is 4,5-DOPA dioxygenase extradiol (DODA), found in Portulaca grandiflora (Rose moss).